A 400-amino-acid chain; its full sequence is S-adenosylmethionine synthase (400 aa).

His17 is an ATP binding site. Asp19 serves as a coordination point for Mg(2+). A K(+)-binding site is contributed by Glu45. L-methionine is bound by residues Glu58 and Gln101. A flexible loop region spans residues 101 to 111 (QSADIAMGVDQ). ATP contacts are provided by residues 177-179 (DGK), 244-245 (RF), Asp253, 259-260 (RK), Ala276, and Lys280. An L-methionine-binding site is contributed by Asp253. Lys284 is a binding site for L-methionine.

This sequence belongs to the AdoMet synthase family. In terms of assembly, homotetramer; dimer of dimers. Mg(2+) is required as a cofactor. It depends on K(+) as a cofactor.

The protein localises to the cytoplasm. The enzyme catalyses L-methionine + ATP + H2O = S-adenosyl-L-methionine + phosphate + diphosphate. The protein operates within amino-acid biosynthesis; S-adenosyl-L-methionine biosynthesis; S-adenosyl-L-methionine from L-methionine: step 1/1. In terms of biological role, catalyzes the formation of S-adenosylmethionine (AdoMet) from methionine and ATP. The overall synthetic reaction is composed of two sequential steps, AdoMet formation and the subsequent tripolyphosphate hydrolysis which occurs prior to release of AdoMet from the enzyme. This chain is S-adenosylmethionine synthase, found in Bacillus subtilis (strain 168).